Consider the following 466-residue polypeptide: Trigger factor (466 aa).

One can recognise a PPIase FKBP-type domain in the interval 162–243; sequence GDVVSIDLSA…VRSVKERELP (82 aa). The tract at residues 428 to 466 is disordered; it reads GNTIDTSEFFGKRVSAGEAEEAEPADEGAARAASDEATT. The segment covering 457 to 466 has biased composition (low complexity); that stretch reads ARAASDEATT.

This sequence belongs to the FKBP-type PPIase family. Tig subfamily.

Its subcellular location is the cytoplasm. It carries out the reaction [protein]-peptidylproline (omega=180) = [protein]-peptidylproline (omega=0). In terms of biological role, involved in protein export. Acts as a chaperone by maintaining the newly synthesized protein in an open conformation. Functions as a peptidyl-prolyl cis-trans isomerase. In Mycobacterium tuberculosis (strain ATCC 25177 / H37Ra), this protein is Trigger factor.